The chain runs to 379 residues: MMKGISSVSQSINYNPYIEFNRPQLQISTVNPNPAQSRFSRPRSLRVLSLSADPSANRNPKSAVDAHAPPLVVVGSANADIYVEIERLPKEGETISAKTGQTLAGGKGANQAACGAKLMYPTYFVGRLGEDAHGKLIAEALGDDGCGVHLDYVRSVNNEPTGHAVVMLQSDGQNSIIIVGGANMKAWPEIMSDDDLEIVRNAGIVLLQREIPDSINIQVAKAVKKAGVPVILDVGGMDTPIPNELLDSIDILSPNETELSRLTGMPTETFEQISQAVAKCHKLGVKQVLVKLGSKGSALFIQGEKPIQQSIIPAAQVVDTTGAGDTFTAAFAVAMVEGKSHEECLRFAAAAASLCVQVKGAIPSMPDRKSVLKLLKFSI.

Residues asparagine 78 to aspartate 80, glycine 106 to asparagine 110, and glutamate 210 contribute to the substrate site. ATP is bound by residues asparagine 255 and lysine 291–glycine 296. Positions 319 and 321 each coordinate K(+). Glycine 324–aspartate 325 provides a ligand contact to ATP. Aspartate 325 serves as a coordination point for substrate. The Proton acceptor role is filled by aspartate 325. Residues cysteine 355, valine 358, glycine 360, and serine 364 each contribute to the K(+) site.

The protein belongs to the carbohydrate kinase PfkB family. Ribokinase subfamily. Homodimer. It depends on Mg(2+) as a cofactor.

It is found in the plastid. It localises to the chloroplast stroma. The protein resides in the chloroplast nucleoid. The catalysed reaction is D-ribose + ATP = D-ribose 5-phosphate + ADP + H(+). It participates in carbohydrate metabolism; D-ribose degradation; D-ribose 5-phosphate from beta-D-ribopyranose: step 2/2. With respect to regulation, activated by a monovalent cation that binds near, but not in, the active site. The most likely occupant of the site in vivo is potassium. Ion binding induces a conformational change that may alter substrate affinity. Repressed by calcium, rubidium and sodium. Substrate inhibition is observed in the presence of high ATP concentration (Ki=2.44 mM). In terms of biological role, catalyzes the phosphorylation of ribose at O-5 in a reaction requiring ATP and magnesium. The resulting D-ribose-5-phosphate can then be used either for sythesis of nucleotides, histidine, and tryptophan, or as a component of the pentose phosphate pathway. Can also use xylose and fructose as carbohydrate substrates with a low efficiency. Can use GTP, and, to a lower extent, CTP and UTP as alternative phosphoryl donors. This is Ribokinase from Arabidopsis thaliana (Mouse-ear cress).